A 266-amino-acid chain; its full sequence is DNA damage-regulated autophagy modulator protein 2 (266 aa).

6 helical membrane-spanning segments follow: residues L8–I28, K53–V73, N92–F112, F117–F137, L160–L180, and I207–I227.

It belongs to the DRAM/TMEM150 family.

The protein resides in the lysosome membrane. The protein localises to the photoreceptor inner segment. Its subcellular location is the apical cell membrane. Its function is as follows. Plays a role in the initiation of autophagy. In the retina, might be involved in the process of photoreceptor cells renewal and recycling to preserve visual function. Induces apoptotic cell death when coexpressed with DRAM1. In Bos taurus (Bovine), this protein is DNA damage-regulated autophagy modulator protein 2 (DRAM2).